The sequence spans 219 residues: 2-C-methyl-D-erythritol 4-phosphate cytidylyltransferase (219 aa).

The protein belongs to the IspD/TarI cytidylyltransferase family. IspD subfamily.

It carries out the reaction 2-C-methyl-D-erythritol 4-phosphate + CTP + H(+) = 4-CDP-2-C-methyl-D-erythritol + diphosphate. Its pathway is isoprenoid biosynthesis; isopentenyl diphosphate biosynthesis via DXP pathway; isopentenyl diphosphate from 1-deoxy-D-xylulose 5-phosphate: step 2/6. Its function is as follows. Catalyzes the formation of 4-diphosphocytidyl-2-C-methyl-D-erythritol from CTP and 2-C-methyl-D-erythritol 4-phosphate (MEP). The protein is 2-C-methyl-D-erythritol 4-phosphate cytidylyltransferase of Chlamydia trachomatis serovar D (strain ATCC VR-885 / DSM 19411 / UW-3/Cx).